A 261-amino-acid polypeptide reads, in one-letter code: Cytochrome c oxidase subunit 2 (261 aa).

Over 1 to 34 (MSFTGIFHFFTNSPCDAAEPWQLGSQDAATPMMQ) the chain is Mitochondrial intermembrane. Residues 35-55 (GIIDLHHDIFFFLILILVFVS) traverse the membrane as a helical segment. Residues 56–87 (RILVRALWHFHSKKNPIPQRIVHGTTIEILRT) lie on the Mitochondrial matrix side of the membrane. Residues 88–108 (IFPSIIPMFIAIPSFALLYSM) traverse the membrane as a helical segment. Residues 109-261 (DEVVVDPAMT…NQLIPQTGEA (153 aa)) lie on the Mitochondrial intermembrane side of the membrane. 5 residues coordinate Cu cation: His-188, Cys-223, Glu-225, Cys-227, and His-231. Glu-225 is a Mg(2+) binding site.

This sequence belongs to the cytochrome c oxidase subunit 2 family. In terms of assembly, component of the cytochrome c oxidase (complex IV, CIV), a multisubunit enzyme composed of a catalytic core of 3 subunits and several supernumerary subunits. The complex exists as a monomer or a dimer and forms supercomplexes (SCs) in the inner mitochondrial membrane with ubiquinol-cytochrome c oxidoreductase (cytochrome b-c1 complex, complex III, CIII). The cofactor is Cu cation.

It localises to the mitochondrion inner membrane. The catalysed reaction is 4 Fe(II)-[cytochrome c] + O2 + 8 H(+)(in) = 4 Fe(III)-[cytochrome c] + 2 H2O + 4 H(+)(out). Functionally, component of the cytochrome c oxidase, the last enzyme in the mitochondrial electron transport chain which drives oxidative phosphorylation. The respiratory chain contains 3 multisubunit complexes succinate dehydrogenase (complex II, CII), ubiquinol-cytochrome c oxidoreductase (cytochrome b-c1 complex, complex III, CIII) and cytochrome c oxidase (complex IV, CIV), that cooperate to transfer electrons derived from NADH and succinate to molecular oxygen, creating an electrochemical gradient over the inner membrane that drives transmembrane transport and the ATP synthase. Cytochrome c oxidase is the component of the respiratory chain that catalyzes the reduction of oxygen to water. Electrons originating from reduced cytochrome c in the intermembrane space (IMS) are transferred via the dinuclear copper A center (CU(A)) of subunit 2 and heme A of subunit 1 to the active site in subunit 1, a binuclear center (BNC) formed by heme A3 and copper B (CU(B)). The BNC reduces molecular oxygen to 2 water molecules using 4 electrons from cytochrome c in the IMS and 4 protons from the mitochondrial matrix. The protein is Cytochrome c oxidase subunit 2 (COX2) of Daucus carota (Wild carrot).